The sequence spans 415 residues: Diaminopimelate decarboxylase (415 aa).

At lysine 60 the chain carries N6-(pyridoxal phosphate)lysine. Pyridoxal 5'-phosphate-binding positions include glycine 239 and 274-277 (EPGR). Residues arginine 277, arginine 313, and tyrosine 317 each coordinate substrate. Cysteine 344 serves as the catalytic Proton donor. Glutamate 345 and tyrosine 372 together coordinate substrate. Tyrosine 372 serves as a coordination point for pyridoxal 5'-phosphate.

This sequence belongs to the Orn/Lys/Arg decarboxylase class-II family. LysA subfamily. As to quaternary structure, homodimer. It depends on pyridoxal 5'-phosphate as a cofactor.

The catalysed reaction is meso-2,6-diaminopimelate + H(+) = L-lysine + CO2. It participates in amino-acid biosynthesis; L-lysine biosynthesis via DAP pathway; L-lysine from DL-2,6-diaminopimelate: step 1/1. In terms of biological role, specifically catalyzes the decarboxylation of meso-diaminopimelate (meso-DAP) to L-lysine. This is Diaminopimelate decarboxylase from Haemophilus influenzae (strain ATCC 51907 / DSM 11121 / KW20 / Rd).